Here is a 328-residue protein sequence, read N- to C-terminus: Coiled-coil domain-containing protein 54 (328 aa).

The stretch at 93–148 (KIQEKTDFFQKQMQVLETKMNVNENKQCATAEDIFSVKEDVDALKKKVTELGNQNS) forms a coiled coil. Thr182 is modified (phosphothreonine).

This chain is Coiled-coil domain-containing protein 54 (CCDC54), found in Bos taurus (Bovine).